The following is a 258-amino-acid chain: Capsid protein (258 aa).

The short motif at 3 to 20 (KRPGDIIISTPGSKVRRR) is the Bipartite nuclear localization signal element. The short motif at 41–55 (RKRAWVNRPMYRKPT) is the Nuclear localization signal element. A zinc finger spans residues 69–86 (CEGPCKVQSFEQRDDVKH). The Nuclear export signal motif lies at 102 to 123 (LTHRVGKRFCIKSIYILGKIWL). Positions 202–249 (KRFYRLNHHVTYNHQEAGKYENHTENALLLYMACTHASNPVYATLKIR) match the Bipartite nuclear localization signal motif.

Belongs to the geminiviridae capsid protein family. As to quaternary structure, homomultimer. Binds to single-stranded and double-stranded viral DNA. Interacts (via nuclear localization signals) with host importin alpha-1a.

It localises to the virion. The protein localises to the host nucleus. In terms of biological role, encapsidates the viral DNA into characteristic twinned ('geminate') particles. Binds the genomic viral ssDNA and shuttles it into and out of the cell nucleus. The CP of bipartite geminiviruses is not required for cell-to-cell or systemic movement. The chain is Capsid protein from African cassava mosaic virus (isolate West Kenyan 844) (ACMV).